A 650-amino-acid polypeptide reads, in one-letter code: Chaperone protein DnaK (650 aa).

A Phosphothreonine; by autocatalysis modification is found at threonine 200.

Belongs to the heat shock protein 70 family.

Functionally, acts as a chaperone. This is Chaperone protein DnaK from Burkholderia orbicola (strain MC0-3).